Here is a 1004-residue protein sequence, read N- to C-terminus: Zinc finger protein 316 (1004 aa).

Positions 1–148 (MAALHTTPDS…EEEEDEDEDD (148 aa)) are disordered. Ala-2 carries the post-translational modification N-acetylalanine. A Phosphothreonine modification is found at Thr-7. Ser-10 is subject to Phosphoserine. Residues 21–60 (GSECDPDQEEEEEEEEKGEEVQEVEEEEEEIVVEEEEEGV) are compositionally biased toward acidic residues. A compositionally biased stretch (low complexity) spans 61–72 (AEVVQDAQVEAV). Residues 73–95 (AEVEVEADVEEEDVKEVLAEEEC) are compositionally biased toward acidic residues. The residue at position 112 (Ser-112) is a Phosphoserine. Residues 132-148 (EDLEEEEEEEEDEDEDD) are compositionally biased toward acidic residues. Positions 158 to 229 (VTFEDVAVYF…DSPRPEEGDI (72 aa)) constitute a KRAB domain. C2H2-type zinc fingers lie at residues 345 to 367 (TTCD…QRYH), 373 to 395 (FGCE…QRTH), 401 to 423 (FPCP…RRIH), 429 to 451 (YRCA…QRTH), and 457 to 479 (YPCS…QAVH). A C2H2-type 6; degenerate zinc finger spans residues 485–512 (HCCPDCGQAFRLRADFQRHRRGGGCAEA). Residues 508–574 (GCAEAGGDGP…TPSGKVDPAP (67 aa)) form a disordered region. Residues 531-557 (EDTDPGPEGSEVGEADGEAEAAAEERE) are compositionally biased toward acidic residues. C2H2-type zinc fingers lie at residues 691–713 (WICS…QRYH), 719–741 (HRCA…RRTH), 747–769 (FPCP…VRGH), 775–797 (FVCG…GRAH), and 803–825 (YACG…QWAH). A Glycyl lysine isopeptide (Lys-Gly) (interchain with G-Cter in SUMO2) cross-link involves residue Lys-829. 4 C2H2-type zinc fingers span residues 831 to 853 (HRCP…RRTH), 859 to 881 (FRCA…RRGH), 887 to 909 (FPCP…QRTH), and 915 to 937 (YACA…MKTH). A disordered region spans residues 936–976 (THRGATAAPGSGSAPAPAPKPEAAAKGPSSAGPGERGSALL). The segment covering 939 to 968 (GATAAPGSGSAPAPAPKPEAAAKGPSSAGP) has biased composition (low complexity). Lys-955 participates in a covalent cross-link: Glycyl lysine isopeptide (Lys-Gly) (interchain with G-Cter in SUMO2).

It belongs to the krueppel C2H2-type zinc-finger protein family.

It localises to the nucleus. Functionally, may be involved in transcriptional regulation. The polypeptide is Zinc finger protein 316 (ZNF316) (Homo sapiens (Human)).